Here is a 463-residue protein sequence, read N- to C-terminus: Toxin CaTX-A (463 aa).

An N-terminal signal peptide occupies residues 1 to 18; sequence MSRGYSLHLVLFLVLSTA.

This sequence belongs to the jellyfish toxin family. Type II subfamily. As to quaternary structure, oligomer. In terms of processing, contains disulfide bonds. It is suggested that CaTX-B is synthesized in the tentacle, is modified (become CaTX-A) and then migrates to the nematocyst.

The protein resides in the secreted. It localises to the nematocyst. The protein localises to the target cell membrane. Its function is as follows. Has potent hemolytic activity. Is lethal to crayfish. Causes cutaneous inflammation in humans. May act as a pore-forming toxin, disrupting normal transmembrane ion concentration gradients in susceptible cells. The sequence is that of Toxin CaTX-A from Carybdea alata (Hawaiian box jellyfish).